The chain runs to 612 residues: UvrABC system protein C (612 aa).

The 80-residue stretch at 11 to 90 (TASGVYLMKG…IKKYRPRYNI (80 aa)) folds into the GIY-YIG domain. A UVR domain is found at 200–235 (SEVVESLQHQMAAAAERMAFEEAARLRDQLRAIEQT).

Belongs to the UvrC family. In terms of assembly, interacts with UvrB in an incision complex.

Its subcellular location is the cytoplasm. In terms of biological role, the UvrABC repair system catalyzes the recognition and processing of DNA lesions. UvrC both incises the 5' and 3' sides of the lesion. The N-terminal half is responsible for the 3' incision and the C-terminal half is responsible for the 5' incision. This is UvrABC system protein C from Syntrophotalea carbinolica (strain DSM 2380 / NBRC 103641 / GraBd1) (Pelobacter carbinolicus).